Reading from the N-terminus, the 336-residue chain is Biotin synthase (336 aa).

Positions 55–288 (GEAASLHACS…RTIIKFAAGR (234 aa)) constitute a Radical SAM core domain. [4Fe-4S] cluster is bound by residues C73, C77, and C80. 3 residues coordinate [2Fe-2S] cluster: C152, C213, and K283.

This sequence belongs to the radical SAM superfamily. Biotin synthase family. In terms of assembly, homodimer. [4Fe-4S] cluster serves as cofactor. It depends on [2Fe-2S] cluster as a cofactor.

The catalysed reaction is (4R,5S)-dethiobiotin + (sulfur carrier)-SH + 2 reduced [2Fe-2S]-[ferredoxin] + 2 S-adenosyl-L-methionine = (sulfur carrier)-H + biotin + 2 5'-deoxyadenosine + 2 L-methionine + 2 oxidized [2Fe-2S]-[ferredoxin]. It functions in the pathway cofactor biosynthesis; biotin biosynthesis; biotin from 7,8-diaminononanoate: step 2/2. Catalyzes the conversion of dethiobiotin (DTB) to biotin by the insertion of a sulfur atom into dethiobiotin via a radical-based mechanism. This chain is Biotin synthase, found in Chlorobium limicola (strain DSM 245 / NBRC 103803 / 6330).